The primary structure comprises 293 residues: UDP-3-O-acyl-N-acetylglucosamine deacetylase (293 aa).

Residues histidine 79, histidine 236, and aspartate 240 each contribute to the Zn(2+) site. The active-site Proton donor is histidine 263.

The protein belongs to the LpxC family. Zn(2+) serves as cofactor.

It carries out the reaction a UDP-3-O-[(3R)-3-hydroxyacyl]-N-acetyl-alpha-D-glucosamine + H2O = a UDP-3-O-[(3R)-3-hydroxyacyl]-alpha-D-glucosamine + acetate. It participates in glycolipid biosynthesis; lipid IV(A) biosynthesis; lipid IV(A) from (3R)-3-hydroxytetradecanoyl-[acyl-carrier-protein] and UDP-N-acetyl-alpha-D-glucosamine: step 2/6. Its function is as follows. Catalyzes the hydrolysis of UDP-3-O-myristoyl-N-acetylglucosamine to form UDP-3-O-myristoylglucosamine and acetate, the committed step in lipid A biosynthesis. This chain is UDP-3-O-acyl-N-acetylglucosamine deacetylase, found in Phenylobacterium zucineum (strain HLK1).